The following is a 155-amino-acid chain: Protein Smg homolog (155 aa).

This sequence belongs to the Smg family.

In Azoarcus sp. (strain BH72), this protein is Protein Smg homolog.